The sequence spans 172 residues: Adenine phosphoribosyltransferase (172 aa).

It belongs to the purine/pyrimidine phosphoribosyltransferase family. In terms of assembly, homodimer.

The protein localises to the cytoplasm. The catalysed reaction is AMP + diphosphate = 5-phospho-alpha-D-ribose 1-diphosphate + adenine. It functions in the pathway purine metabolism; AMP biosynthesis via salvage pathway; AMP from adenine: step 1/1. Its function is as follows. Catalyzes a salvage reaction resulting in the formation of AMP, that is energically less costly than de novo synthesis. This Alkaliphilus oremlandii (strain OhILAs) (Clostridium oremlandii (strain OhILAs)) protein is Adenine phosphoribosyltransferase.